Consider the following 218-residue polypeptide: Probable nicotinate-nucleotide adenylyltransferase (218 aa).

Belongs to the NadD family.

It carries out the reaction nicotinate beta-D-ribonucleotide + ATP + H(+) = deamido-NAD(+) + diphosphate. It participates in cofactor biosynthesis; NAD(+) biosynthesis; deamido-NAD(+) from nicotinate D-ribonucleotide: step 1/1. Its function is as follows. Catalyzes the reversible adenylation of nicotinate mononucleotide (NaMN) to nicotinic acid adenine dinucleotide (NaAD). This chain is Probable nicotinate-nucleotide adenylyltransferase, found in Burkholderia cenocepacia (strain ATCC BAA-245 / DSM 16553 / LMG 16656 / NCTC 13227 / J2315 / CF5610) (Burkholderia cepacia (strain J2315)).